Here is a 612-residue protein sequence, read N- to C-terminus: Baeyer-Villiger monooxygenase 4 (612 aa).

FAD-binding positions include E99, 107 to 110 (TWYW), D119, Y125, and A169. Residue 117–119 (QCD) participates in NADP(+) binding. NADP(+)-binding positions include 253–259 (TGATGVQ), 276–277 (RT), and 393–394 (KR).

The protein belongs to the FAD-binding monooxygenase family. The cofactor is FAD.

In terms of biological role, catalyzes a Baeyer-Villiger oxidation reaction, i.e. the insertion of an oxygen atom into a carbon-carbon bond adjacent to a carbonyl, which converts ketones to esters or lactones using NADPH as an electron donor. Has a broad substrate scope and oxidizes different compounds including substituted and unsubstituted alicyclic, bicyclic-, aliphatic-ketones, ketones with an aromatic moiety, and sulfides. The highest activities are measured for 2- and 3-methylcyclohexanone, phenylacetone, bicyclo[3.2.0]hept-2-en-6-one and menthone. Cannot use NADH instead of NADPH. Is not active on benzaldehyde. This is Baeyer-Villiger monooxygenase 4 from Dietzia sp. (strain D5).